Here is a 125-residue protein sequence, read N- to C-terminus: Large ribosomal subunit protein bL12 (125 aa).

It belongs to the bacterial ribosomal protein bL12 family. As to quaternary structure, homodimer. Part of the ribosomal stalk of the 50S ribosomal subunit. Forms a multimeric L10(L12)X complex, where L10 forms an elongated spine to which 2 to 4 L12 dimers bind in a sequential fashion. Binds GTP-bound translation factors.

Forms part of the ribosomal stalk which helps the ribosome interact with GTP-bound translation factors. Is thus essential for accurate translation. The polypeptide is Large ribosomal subunit protein bL12 (Liberibacter africanus (Citrus greening disease)).